We begin with the raw amino-acid sequence, 245 residues long: tRNA pseudouridine synthase A (245 aa).

The active-site Nucleophile is the Asp52. Residue Tyr111 coordinates substrate.

It belongs to the tRNA pseudouridine synthase TruA family. In terms of assembly, homodimer.

It carries out the reaction uridine(38/39/40) in tRNA = pseudouridine(38/39/40) in tRNA. Its function is as follows. Formation of pseudouridine at positions 38, 39 and 40 in the anticodon stem and loop of transfer RNAs. The chain is tRNA pseudouridine synthase A from Rickettsia prowazekii (strain Madrid E).